The primary structure comprises 665 residues: GTPase IMAP family member 8 (665 aa).

An AIG1-type G 1 domain is found at 8–210 (MSELRLLLLG…HVNFKTEGSR (203 aa)). A G1 region spans residues 17-24 (GKCRSGKS). Residues 17–25 (GKCRSGKSA) and Ser38 each bind GTP. A G2 region spans residues 44-48 (TVIKM). Residues 65–68 (DTPD) form a G3 region. The G4 stretch occupies residues 134-137 (TRKD). GTP contacts are provided by residues 135-137 (RKD) and Asn170. The G5 stretch occupies residues 169–171 (NNK). The interval 217–246 (EAASQEGDKPQGPRERQLQSTGPEQNPGTS) is disordered. Basic and acidic residues predominate over residues 222–233 (EGDKPQGPRERQ). Over residues 234 to 246 (LQSTGPEQNPGTS) the composition is skewed to polar residues. 2 consecutive AIG1-type G domains span residues 245 to 435 (TSEL…VFRE) and 436 to 644 (KETL…SKLI). Coiled-coil stretches lie at residues 400 to 427 (NYRATGEEEQRQADELLEKIESMVHQNG) and 608 to 657 (QAQE…EKLL).

The protein belongs to the TRAFAC class TrmE-Era-EngA-EngB-Septin-like GTPase superfamily. AIG1/Toc34/Toc159-like paraseptin GTPase family. IAN subfamily. In terms of tissue distribution, expressed in the spleen, intestine, liver, and colon, as well as in lung, placenta, kidney, muscle, and heart. Extremely low expression, if any, in brain, in thymus, bone marrow, and blood leukocytes. Detected in T-cells.

Its subcellular location is the endoplasmic reticulum. It is found in the golgi apparatus. The protein localises to the mitochondrion. The protein resides in the cytoplasm. It localises to the cytosol. In terms of biological role, exerts an anti-apoptotic effect in the immune system and is involved in responses to infections. This Homo sapiens (Human) protein is GTPase IMAP family member 8 (GIMAP8).